A 417-amino-acid polypeptide reads, in one-letter code: Phosphoglycerate kinase (417 aa).

Substrate contacts are provided by residues 24–26 (DLN), R44, 67–70 (HLGR), R126, and R170. Residues K220, G316, E347, and 373 to 376 (GGDS) each bind ATP.

It belongs to the phosphoglycerate kinase family. As to quaternary structure, monomer.

It is found in the cytoplasm. It carries out the reaction (2R)-3-phosphoglycerate + ATP = (2R)-3-phospho-glyceroyl phosphate + ADP. It participates in carbohydrate degradation; glycolysis; pyruvate from D-glyceraldehyde 3-phosphate: step 2/5. The chain is Phosphoglycerate kinase from Renibacterium salmoninarum (strain ATCC 33209 / DSM 20767 / JCM 11484 / NBRC 15589 / NCIMB 2235).